Consider the following 416-residue polypeptide: Tryptophan synthase beta chain (416 aa).

An N6-(pyridoxal phosphate)lysine modification is found at lysine 109.

The protein belongs to the TrpB family. As to quaternary structure, tetramer of two alpha and two beta chains. Pyridoxal 5'-phosphate is required as a cofactor.

It catalyses the reaction (1S,2R)-1-C-(indol-3-yl)glycerol 3-phosphate + L-serine = D-glyceraldehyde 3-phosphate + L-tryptophan + H2O. The protein operates within amino-acid biosynthesis; L-tryptophan biosynthesis; L-tryptophan from chorismate: step 5/5. The beta subunit is responsible for the synthesis of L-tryptophan from indole and L-serine. The protein is Tryptophan synthase beta chain of Prochlorococcus marinus (strain SARG / CCMP1375 / SS120).